A 52-amino-acid polypeptide reads, in one-letter code: Ornatin-B (52 aa).

The Cell attachment site motif lies at 42–44 (RGD).

This sequence belongs to the ornatin family.

It localises to the secreted. In terms of biological role, potent inhibitor of fibrinogen interaction with platelet receptors expressed on glycoprotein IIb-IIIa complex. May prevent blood from clotting during either feeding and/or storage of ingested blood. The chain is Ornatin-B from Placobdella ornata (Turtle leech).